The following is a 407-amino-acid chain: MIGFEIFLAIGMFTAIVLGLVAIILVARAKLVSSGDVTIQINGEHSLTVPAGGKLLQTLATNNVFLSSACGGGGTCAQCKCVVVEGGGEMLPTEESHFTRRQAKEGWRLSCQTPVKQDMQIRVPEEVFGVKKWECTVESNPNVATFIKELTLRLPDGESVDFRAGGYVQLECPPHVVEYKDFDIQPEYRGDWDKFNMWRYVSKVDETVIRAYSMANYPEEQGVVKFNIRIASPPPGSDLPPGQMSSWVFNLKPGDKVTVYGPFGEFFAKDTEAEMVFIGGGAGMAPMRSHIFDQLRRLKSNRKISFWYGARSLREAFYTEEYDQLQAENPNFQWHLALSDPQPEDNWTGLTGFIHNVLFENYLKDHPAPEDCEFYMCGPPMMNAAVIKMLTDLGVERENILLDDFGG.

Residues 6-26 (IFLAIGMFTAIVLGLVAIILV) traverse the membrane as a helical segment. The 2Fe-2S ferredoxin-type domain maps to 35–127 (GDVTIQINGE…DMQIRVPEEV (93 aa)). 4 residues coordinate [2Fe-2S] cluster: cysteine 70, cysteine 76, cysteine 79, and cysteine 111. The region spanning 130–269 (VKKWECTVES…YGPFGEFFAK (140 aa)) is the FAD-binding FR-type domain.

The protein belongs to the NqrF family. As to quaternary structure, composed of six subunits; NqrA, NqrB, NqrC, NqrD, NqrE and NqrF. The cofactor is [2Fe-2S] cluster. It depends on FAD as a cofactor.

Its subcellular location is the cell inner membrane. It catalyses the reaction a ubiquinone + n Na(+)(in) + NADH + H(+) = a ubiquinol + n Na(+)(out) + NAD(+). Functionally, NQR complex catalyzes the reduction of ubiquinone-1 to ubiquinol by two successive reactions, coupled with the transport of Na(+) ions from the cytoplasm to the periplasm. The first step is catalyzed by NqrF, which accepts electrons from NADH and reduces ubiquinone-1 to ubisemiquinone by a one-electron transfer pathway. This Pseudomonas aeruginosa (strain UCBPP-PA14) protein is Na(+)-translocating NADH-quinone reductase subunit F.